The sequence spans 809 residues: Bifunctional enzyme MurC/Ddl (809 aa).

A UDP-N-acetylmuramate--alanine ligase region spans residues 1–450; that stretch reads MKGTPQYHFI…GEALKDFNPK (450 aa). Residues 111–117 and 606–661 contribute to the ATP site; these read GSHGKTG and IETF…SREI. A D-alanine--D-alanine ligase region spans residues 451-809; that stretch reads KLSIGLVCGG…FTKEQDLVKR (359 aa). The region spanning 573-784 is the ATP-grasp domain; that stretch reads KRIASAVGVP…QEQIVDHFII (212 aa). Positions 738, 751, and 753 each coordinate Mg(2+).

The protein in the N-terminal section; belongs to the MurCDEF family. In the C-terminal section; belongs to the D-alanine--D-alanine ligase family. Mg(2+) serves as cofactor. Mn(2+) is required as a cofactor.

It is found in the cytoplasm. The enzyme catalyses UDP-N-acetyl-alpha-D-muramate + L-alanine + ATP = UDP-N-acetyl-alpha-D-muramoyl-L-alanine + ADP + phosphate + H(+). It carries out the reaction 2 D-alanine + ATP = D-alanyl-D-alanine + ADP + phosphate + H(+). It functions in the pathway cell wall biogenesis; peptidoglycan biosynthesis. In terms of biological role, cell wall formation. This chain is Bifunctional enzyme MurC/Ddl (murC/ddl), found in Chlamydia pneumoniae (Chlamydophila pneumoniae).